A 365-amino-acid chain; its full sequence is UDP-N-acetylglucosamine--N-acetylmuramyl-(pentapeptide) pyrophosphoryl-undecaprenol N-acetylglucosamine transferase (365 aa).

UDP-N-acetyl-alpha-D-glucosamine-binding positions include 10–12 (TGG), asparagine 124, arginine 165, serine 193, isoleucine 248, and glutamine 293.

Belongs to the glycosyltransferase 28 family. MurG subfamily.

The protein resides in the cell inner membrane. The enzyme catalyses di-trans,octa-cis-undecaprenyl diphospho-N-acetyl-alpha-D-muramoyl-L-alanyl-D-glutamyl-meso-2,6-diaminopimeloyl-D-alanyl-D-alanine + UDP-N-acetyl-alpha-D-glucosamine = di-trans,octa-cis-undecaprenyl diphospho-[N-acetyl-alpha-D-glucosaminyl-(1-&gt;4)]-N-acetyl-alpha-D-muramoyl-L-alanyl-D-glutamyl-meso-2,6-diaminopimeloyl-D-alanyl-D-alanine + UDP + H(+). The protein operates within cell wall biogenesis; peptidoglycan biosynthesis. Its function is as follows. Cell wall formation. Catalyzes the transfer of a GlcNAc subunit on undecaprenyl-pyrophosphoryl-MurNAc-pentapeptide (lipid intermediate I) to form undecaprenyl-pyrophosphoryl-MurNAc-(pentapeptide)GlcNAc (lipid intermediate II). The sequence is that of UDP-N-acetylglucosamine--N-acetylmuramyl-(pentapeptide) pyrophosphoryl-undecaprenol N-acetylglucosamine transferase from Geotalea uraniireducens (strain Rf4) (Geobacter uraniireducens).